The sequence spans 61 residues: MDIKTLREKSADELKAHLIDLRKEQFSVRMQQVTGQLPKTHDIRRVRREIARVKTLLGSTK.

It belongs to the universal ribosomal protein uL29 family.

This Stenotrophomonas maltophilia (strain K279a) protein is Large ribosomal subunit protein uL29.